Reading from the N-terminus, the 504-residue chain is Glutamate--tRNA ligase (504 aa).

Positions 10-20 (PSPTGDPHVGT) match the 'HIGH' region motif. The 'KMSKS' region motif lies at 251–255 (KLSKR). Lysine 254 serves as a coordination point for ATP.

The protein belongs to the class-I aminoacyl-tRNA synthetase family. Glutamate--tRNA ligase type 1 subfamily. In terms of assembly, monomer.

The protein resides in the cytoplasm. The catalysed reaction is tRNA(Glu) + L-glutamate + ATP = L-glutamyl-tRNA(Glu) + AMP + diphosphate. Its function is as follows. Catalyzes the attachment of glutamate to tRNA(Glu) in a two-step reaction: glutamate is first activated by ATP to form Glu-AMP and then transferred to the acceptor end of tRNA(Glu). The polypeptide is Glutamate--tRNA ligase (Cellvibrio japonicus (strain Ueda107) (Pseudomonas fluorescens subsp. cellulosa)).